We begin with the raw amino-acid sequence, 150 residues long: Large ribosomal subunit protein bL9 (150 aa).

Belongs to the bacterial ribosomal protein bL9 family.

Its function is as follows. Binds to the 23S rRNA. The polypeptide is Large ribosomal subunit protein bL9 (Serratia proteamaculans (strain 568)).